We begin with the raw amino-acid sequence, 118 residues long: Large ribosomal subunit protein bL19 (118 aa).

The protein belongs to the bacterial ribosomal protein bL19 family.

Functionally, this protein is located at the 30S-50S ribosomal subunit interface and may play a role in the structure and function of the aminoacyl-tRNA binding site. The sequence is that of Large ribosomal subunit protein bL19 from Geotalea uraniireducens (strain Rf4) (Geobacter uraniireducens).